The chain runs to 142 residues: Crustacean hyperglycemic hormones (142 aa).

Positions 1 to 26 (MYSKTIPAMLAIITVAYLCALPHAHA) are cleaved as a signal peptide. Q67 bears the Pyrrolidone carboxylic acid; partial mark. 3 cysteine pairs are disulfide-bonded: C73-C109, C89-C105, and C92-C118. At V138 the chain carries Valine amide.

The protein belongs to the arthropod CHH/MIH/GIH/VIH hormone family. The N-terminus is blocked only in isoform CHH-II but not in isoform CHH-I. As to expression, produced by the medulla terminalis X-organ in the eyestalks and transported to the sinus gland where they are stored and released.

The protein localises to the secreted. Hormone found in the sinus gland of isopods and decapods which controls the blood sugar level. Has a secretagogue action over the amylase released from the midgut gland. May act as a stress hormone and may be involved in the control of molting and reproduction. The polypeptide is Crustacean hyperglycemic hormones (Carcinus maenas (Common shore crab)).